A 258-amino-acid chain; its full sequence is Thiazole synthase (258 aa).

Residue Lys-97 is the Schiff-base intermediate with DXP of the active site. 1-deoxy-D-xylulose 5-phosphate-binding positions include Gly-158, 184–185, and 206–207; these read AG and NT.

Belongs to the ThiG family. Homotetramer. Forms heterodimers with either ThiH or ThiS.

Its subcellular location is the cytoplasm. The enzyme catalyses [ThiS sulfur-carrier protein]-C-terminal-Gly-aminoethanethioate + 2-iminoacetate + 1-deoxy-D-xylulose 5-phosphate = [ThiS sulfur-carrier protein]-C-terminal Gly-Gly + 2-[(2R,5Z)-2-carboxy-4-methylthiazol-5(2H)-ylidene]ethyl phosphate + 2 H2O + H(+). Its pathway is cofactor biosynthesis; thiamine diphosphate biosynthesis. In terms of biological role, catalyzes the rearrangement of 1-deoxy-D-xylulose 5-phosphate (DXP) to produce the thiazole phosphate moiety of thiamine. Sulfur is provided by the thiocarboxylate moiety of the carrier protein ThiS. In vitro, sulfur can be provided by H(2)S. This is Thiazole synthase from Bacteroides fragilis (strain ATCC 25285 / DSM 2151 / CCUG 4856 / JCM 11019 / LMG 10263 / NCTC 9343 / Onslow / VPI 2553 / EN-2).